The following is a 216-amino-acid chain: Ribosomal RNA small subunit methyltransferase G (216 aa).

S-adenosyl-L-methionine is bound by residues G86, L91, 137–138, and R155; that span reads VE.

This sequence belongs to the methyltransferase superfamily. RNA methyltransferase RsmG family.

The protein localises to the cytoplasm. It catalyses the reaction guanosine(527) in 16S rRNA + S-adenosyl-L-methionine = N(7)-methylguanosine(527) in 16S rRNA + S-adenosyl-L-homocysteine. Specifically methylates the N7 position of guanine in position 527 of 16S rRNA. The polypeptide is Ribosomal RNA small subunit methyltransferase G (Lawsonia intracellularis (strain PHE/MN1-00)).